The chain runs to 339 residues: Uroporphyrinogen decarboxylase (339 aa).

Residues 23–27, aspartate 72, tyrosine 147, threonine 202, and histidine 315 each bind substrate; that span reads RQAGR.

Belongs to the uroporphyrinogen decarboxylase family. As to quaternary structure, homodimer.

The protein localises to the cytoplasm. The enzyme catalyses uroporphyrinogen III + 4 H(+) = coproporphyrinogen III + 4 CO2. It functions in the pathway porphyrin-containing compound metabolism; protoporphyrin-IX biosynthesis; coproporphyrinogen-III from 5-aminolevulinate: step 4/4. Functionally, catalyzes the decarboxylation of four acetate groups of uroporphyrinogen-III to yield coproporphyrinogen-III. This Citrifermentans bemidjiense (strain ATCC BAA-1014 / DSM 16622 / JCM 12645 / Bem) (Geobacter bemidjiensis) protein is Uroporphyrinogen decarboxylase.